Here is a 442-residue protein sequence, read N- to C-terminus: Tubulin beta chain (442 aa).

8 residues coordinate GTP: Gln-11, Glu-69, Ser-138, Gly-142, Thr-143, Gly-144, Asn-204, and Asn-226. Glu-69 lines the Mg(2+) pocket. The tract at residues Glu-421 to Glu-442 is disordered. The span at Thr-429–Glu-442 shows a compositional bias: acidic residues.

It belongs to the tubulin family. Dimer of alpha and beta chains. A typical microtubule is a hollow water-filled tube with an outer diameter of 25 nm and an inner diameter of 15 nM. Alpha-beta heterodimers associate head-to-tail to form protofilaments running lengthwise along the microtubule wall with the beta-tubulin subunit facing the microtubule plus end conferring a structural polarity. Microtubules usually have 13 protofilaments but different protofilament numbers can be found in some organisms and specialized cells. It depends on Mg(2+) as a cofactor.

It localises to the cytoplasm. Its subcellular location is the cytoskeleton. Tubulin is the major constituent of microtubules, a cylinder consisting of laterally associated linear protofilaments composed of alpha- and beta-tubulin heterodimers. Microtubules grow by the addition of GTP-tubulin dimers to the microtubule end, where a stabilizing cap forms. Below the cap, tubulin dimers are in GDP-bound state, owing to GTPase activity of alpha-tubulin. The chain is Tubulin beta chain (TUBB1) from Stylonychia lemnae (Ciliate).